A 294-amino-acid polypeptide reads, in one-letter code: 4-hydroxy-tetrahydrodipicolinate synthase (294 aa).

A pyruvate-binding site is contributed by threonine 45. The active-site Proton donor/acceptor is the tyrosine 133. The Schiff-base intermediate with substrate role is filled by lysine 161. Residue isoleucine 203 participates in pyruvate binding.

The protein belongs to the DapA family. As to quaternary structure, homotetramer; dimer of dimers.

The protein resides in the cytoplasm. It carries out the reaction L-aspartate 4-semialdehyde + pyruvate = (2S,4S)-4-hydroxy-2,3,4,5-tetrahydrodipicolinate + H2O + H(+). Its pathway is amino-acid biosynthesis; L-lysine biosynthesis via DAP pathway; (S)-tetrahydrodipicolinate from L-aspartate: step 3/4. In terms of biological role, catalyzes the condensation of (S)-aspartate-beta-semialdehyde [(S)-ASA] and pyruvate to 4-hydroxy-tetrahydrodipicolinate (HTPA). The protein is 4-hydroxy-tetrahydrodipicolinate synthase of Shewanella frigidimarina (strain NCIMB 400).